The sequence spans 504 residues: Maturase K (504 aa).

It belongs to the intron maturase 2 family. MatK subfamily.

The protein resides in the plastid. The protein localises to the chloroplast. In terms of biological role, usually encoded in the trnK tRNA gene intron. Probably assists in splicing its own and other chloroplast group II introns. This Eichhornia crassipes (Water hyacinth) protein is Maturase K.